Here is a 163-residue protein sequence, read N- to C-terminus: Large ribosomal subunit protein uL10 (163 aa).

It belongs to the universal ribosomal protein uL10 family. In terms of assembly, part of the ribosomal stalk of the 50S ribosomal subunit. The N-terminus interacts with L11 and the large rRNA to form the base of the stalk. The C-terminus forms an elongated spine to which L12 dimers bind in a sequential fashion forming a multimeric L10(L12)X complex.

Its function is as follows. Forms part of the ribosomal stalk, playing a central role in the interaction of the ribosome with GTP-bound translation factors. The chain is Large ribosomal subunit protein uL10 from Haemophilus influenzae (strain PittGG).